The primary structure comprises 199 residues: uncharacterized protein (199 aa).

A run of 4 helical transmembrane segments spans residues 35 to 55 (CELAFSILILFCAFAELIFYD), 57 to 77 (FVIFFLMIIASFVFVLLYLEF), 94 to 114 (LSAAFMSMVCWLSVLIPIFFG), and 131 to 151 (YYGCQVIFGSLLTTFAAASFA).

Its subcellular location is the membrane. This is an uncharacterized protein from Caenorhabditis elegans.